Here is a 585-residue protein sequence, read N- to C-terminus: Arginine--tRNA ligase (585 aa).

A 'HIGH' region motif is present at residues 127–137 (PNTNKPLHVGH).

This sequence belongs to the class-I aminoacyl-tRNA synthetase family. As to quaternary structure, monomer.

The protein resides in the cytoplasm. It catalyses the reaction tRNA(Arg) + L-arginine + ATP = L-arginyl-tRNA(Arg) + AMP + diphosphate. In Borreliella afzelii (strain PKo) (Borrelia afzelii), this protein is Arginine--tRNA ligase.